Reading from the N-terminus, the 340-residue chain is S-adenosylmethionine:tRNA ribosyltransferase-isomerase (340 aa).

It belongs to the QueA family. In terms of assembly, monomer.

The protein resides in the cytoplasm. It carries out the reaction 7-aminomethyl-7-carbaguanosine(34) in tRNA + S-adenosyl-L-methionine = epoxyqueuosine(34) in tRNA + adenine + L-methionine + 2 H(+). It participates in tRNA modification; tRNA-queuosine biosynthesis. In terms of biological role, transfers and isomerizes the ribose moiety from AdoMet to the 7-aminomethyl group of 7-deazaguanine (preQ1-tRNA) to give epoxyqueuosine (oQ-tRNA). This is S-adenosylmethionine:tRNA ribosyltransferase-isomerase from Campylobacter concisus (strain 13826).